The chain runs to 407 residues: Argininosuccinate synthase (407 aa).

8-16 (AYSGGLDTT) contributes to the ATP binding site. Residues Y86 and S91 each coordinate L-citrulline. ATP is bound at residue G116. Residues T118, N122, and D123 each contribute to the L-aspartate site. Residue N122 coordinates L-citrulline. Residues R126, S178, S187, E264, and Y276 each coordinate L-citrulline.

Belongs to the argininosuccinate synthase family. Type 1 subfamily. As to quaternary structure, homotetramer.

The protein localises to the cytoplasm. The catalysed reaction is L-citrulline + L-aspartate + ATP = 2-(N(omega)-L-arginino)succinate + AMP + diphosphate + H(+). It participates in amino-acid biosynthesis; L-arginine biosynthesis; L-arginine from L-ornithine and carbamoyl phosphate: step 2/3. The protein is Argininosuccinate synthase of Lachnoclostridium phytofermentans (strain ATCC 700394 / DSM 18823 / ISDg) (Clostridium phytofermentans).